Here is a 178-residue protein sequence, read N- to C-terminus: Protein-export protein SecB (178 aa).

The span at 1–13 shows a compositional bias: acidic residues; it reads MADEGDVLTDLDM. The tract at residues 1–25 is disordered; that stretch reads MADEGDVLTDLDMDPAAGGNGADNR.

The protein belongs to the SecB family. As to quaternary structure, homotetramer, a dimer of dimers. One homotetramer interacts with 1 SecA dimer.

It localises to the cytoplasm. Its function is as follows. One of the proteins required for the normal export of preproteins out of the cell cytoplasm. It is a molecular chaperone that binds to a subset of precursor proteins, maintaining them in a translocation-competent state. It also specifically binds to its receptor SecA. In Erythrobacter litoralis (strain HTCC2594), this protein is Protein-export protein SecB.